The primary structure comprises 273 residues: 2,3,4,5-tetrahydropyridine-2,6-dicarboxylate N-succinyltransferase (273 aa).

Substrate is bound by residues Arg-104 and Asp-141.

The protein belongs to the transferase hexapeptide repeat family. Homotrimer.

The protein localises to the cytoplasm. It catalyses the reaction (S)-2,3,4,5-tetrahydrodipicolinate + succinyl-CoA + H2O = (S)-2-succinylamino-6-oxoheptanedioate + CoA. The protein operates within amino-acid biosynthesis; L-lysine biosynthesis via DAP pathway; LL-2,6-diaminopimelate from (S)-tetrahydrodipicolinate (succinylase route): step 1/3. This is 2,3,4,5-tetrahydropyridine-2,6-dicarboxylate N-succinyltransferase from Aromatoleum aromaticum (strain DSM 19018 / LMG 30748 / EbN1) (Azoarcus sp. (strain EbN1)).